Here is a 337-residue protein sequence, read N- to C-terminus: Adenylosuccinate synthetase (337 aa).

Residues 12–18 and 42–44 contribute to the GTP site; these read GDEGKGK and GHT. The active-site Proton acceptor is Asp-13. Mg(2+)-binding residues include Asp-13 and Gly-42. Residues 13-16, 40-43, Thr-124, Arg-138, Gln-176, Thr-191, and Arg-253 each bind IMP; these read DEGK and NAGH. The Proton donor role is filled by His-43. 249–255 contributes to the substrate binding site; sequence TVTGRRR. GTP contacts are provided by residues Arg-255, 281–283, and 321–323; these read GVD and STG.

This sequence belongs to the adenylosuccinate synthetase family. In terms of assembly, homodimer. It depends on Mg(2+) as a cofactor.

It is found in the cytoplasm. The catalysed reaction is IMP + L-aspartate + GTP = N(6)-(1,2-dicarboxyethyl)-AMP + GDP + phosphate + 2 H(+). Its pathway is purine metabolism; AMP biosynthesis via de novo pathway; AMP from IMP: step 1/2. In terms of biological role, plays an important role in the de novo pathway of purine nucleotide biosynthesis. Catalyzes the first committed step in the biosynthesis of AMP from IMP. The protein is Adenylosuccinate synthetase of Archaeoglobus fulgidus (strain ATCC 49558 / DSM 4304 / JCM 9628 / NBRC 100126 / VC-16).